A 648-amino-acid chain; its full sequence is DNA gyrase subunit B (648 aa).

Positions 432-546 (RELFIVEGNS…YGFVYLAQPP (115 aa)) constitute a Toprim domain. The Mg(2+) site is built by Glu-438, Asp-511, and Asp-513.

This sequence belongs to the type II topoisomerase GyrB family. In terms of assembly, heterotetramer, composed of two GyrA and two GyrB chains. In the heterotetramer, GyrA contains the active site tyrosine that forms a transient covalent intermediate with DNA, while GyrB binds cofactors and catalyzes ATP hydrolysis. It depends on Mg(2+) as a cofactor. The cofactor is Mn(2+). Requires Ca(2+) as cofactor.

The protein localises to the cytoplasm. It catalyses the reaction ATP-dependent breakage, passage and rejoining of double-stranded DNA.. Its function is as follows. A type II topoisomerase that negatively supercoils closed circular double-stranded (ds) DNA in an ATP-dependent manner to modulate DNA topology and maintain chromosomes in an underwound state. Negative supercoiling favors strand separation, and DNA replication, transcription, recombination and repair, all of which involve strand separation. Also able to catalyze the interconversion of other topological isomers of dsDNA rings, including catenanes and knotted rings. Type II topoisomerases break and join 2 DNA strands simultaneously in an ATP-dependent manner. The polypeptide is DNA gyrase subunit B (Metamycoplasma hominis (strain ATCC 23114 / DSM 25592 / NBRC 14850 / NCTC 10111 / PG21) (Mycoplasma hominis)).